Consider the following 271-residue polypeptide: Acyl-[acyl-carrier-protein]--UDP-N-acetylglucosamine O-acyltransferase (271 aa).

Belongs to the transferase hexapeptide repeat family. LpxA subfamily. Homotrimer.

It is found in the cytoplasm. The catalysed reaction is a (3R)-hydroxyacyl-[ACP] + UDP-N-acetyl-alpha-D-glucosamine = a UDP-3-O-[(3R)-3-hydroxyacyl]-N-acetyl-alpha-D-glucosamine + holo-[ACP]. Its pathway is glycolipid biosynthesis; lipid IV(A) biosynthesis; lipid IV(A) from (3R)-3-hydroxytetradecanoyl-[acyl-carrier-protein] and UDP-N-acetyl-alpha-D-glucosamine: step 1/6. In terms of biological role, involved in the biosynthesis of lipid A, a phosphorylated glycolipid that anchors the lipopolysaccharide to the outer membrane of the cell. This chain is Acyl-[acyl-carrier-protein]--UDP-N-acetylglucosamine O-acyltransferase, found in Azorhizobium caulinodans (strain ATCC 43989 / DSM 5975 / JCM 20966 / LMG 6465 / NBRC 14845 / NCIMB 13405 / ORS 571).